A 146-amino-acid chain; its full sequence is Large-conductance mechanosensitive channel (146 aa).

Transmembrane regions (helical) follow at residues 12 to 32 (AFAMRGNVIDMAVGVIIGGAF) and 83 to 103 (GNFLQATFDFIIIAFSIFLFI).

Belongs to the MscL family. As to quaternary structure, homopentamer.

It localises to the cell inner membrane. Channel that opens in response to stretch forces in the membrane lipid bilayer. May participate in the regulation of osmotic pressure changes within the cell. This chain is Large-conductance mechanosensitive channel, found in Phocaeicola vulgatus (strain ATCC 8482 / DSM 1447 / JCM 5826 / CCUG 4940 / NBRC 14291 / NCTC 11154) (Bacteroides vulgatus).